The sequence spans 192 residues: Probable Brix domain-containing ribosomal biogenesis protein (192 aa).

The Brix domain occupies 2–191 (RPAAITTSQR…DFRTKDERMK (190 aa)).

In terms of biological role, probably involved in the biogenesis of the ribosome. This chain is Probable Brix domain-containing ribosomal biogenesis protein, found in Methanopyrus kandleri (strain AV19 / DSM 6324 / JCM 9639 / NBRC 100938).